The sequence spans 67 residues: MARITVEDCLKHIPNRFELALAATYRARQLVQGHTPKVEAKDKPTVVALREIASGQVGIEMLKKVPT.

This sequence belongs to the RNA polymerase subunit omega family. In terms of assembly, the RNAP catalytic core consists of 2 alpha, 1 beta, 1 beta' and 1 omega subunit. When a sigma factor is associated with the core the holoenzyme is formed, which can initiate transcription.

It catalyses the reaction RNA(n) + a ribonucleoside 5'-triphosphate = RNA(n+1) + diphosphate. In terms of biological role, promotes RNA polymerase assembly. Latches the N- and C-terminal regions of the beta' subunit thereby facilitating its interaction with the beta and alpha subunits. The chain is DNA-directed RNA polymerase subunit omega from Cupriavidus metallidurans (strain ATCC 43123 / DSM 2839 / NBRC 102507 / CH34) (Ralstonia metallidurans).